The following is a 59-amino-acid chain: Large ribosomal subunit protein uL30 (59 aa).

The protein belongs to the universal ribosomal protein uL30 family. As to quaternary structure, part of the 50S ribosomal subunit.

This is Large ribosomal subunit protein uL30 from Herminiimonas arsenicoxydans.